Reading from the N-terminus, the 503-residue chain is von Willebrand factor A domain-containing protein 1 (503 aa).

An N-terminal signal peptide occupies residues 1 to 21; the sequence is MEVRKALTCVFLTVFLCSGDA. The 178-residue stretch at 36–213 folds into the VWFA domain; the sequence is DVLFLLDSSG…IIGEDLRNSI (178 aa). 2 consecutive Fibronectin type-III domains span residues 218–324 and 331–423; these read RAER…TVNP and LLSS…VLPA.

In terms of assembly, homodimer or homomultimer; disulfide-linked.

It localises to the secreted. The protein resides in the extracellular space. It is found in the extracellular matrix. The protein localises to the basement membrane. Functionally, promotes matrix assembly. Involved in the organization of skeletal muscles and in the formation of neuromuscular junctions. This Danio rerio (Zebrafish) protein is von Willebrand factor A domain-containing protein 1.